Reading from the N-terminus, the 134-residue chain is UPF0412 protein YaaI (134 aa).

The N-terminal stretch at 1–23 (MKSVFTISASLAISLMLCCTAQA) is a signal peptide.

It belongs to the UPF0412 family.

This chain is UPF0412 protein YaaI, found in Escherichia coli O157:H7.